The following is a 469-amino-acid chain: uncharacterized protein (469 aa).

This is an uncharacterized protein from Treponema pallidum (strain Nichols).